A 101-amino-acid chain; its full sequence is Phosphoribosyl-ATP pyrophosphatase (101 aa).

This sequence belongs to the PRA-PH family.

The protein resides in the cytoplasm. The enzyme catalyses 1-(5-phospho-beta-D-ribosyl)-ATP + H2O = 1-(5-phospho-beta-D-ribosyl)-5'-AMP + diphosphate + H(+). It participates in amino-acid biosynthesis; L-histidine biosynthesis; L-histidine from 5-phospho-alpha-D-ribose 1-diphosphate: step 2/9. The protein is Phosphoribosyl-ATP pyrophosphatase of Natronomonas pharaonis (strain ATCC 35678 / DSM 2160 / CIP 103997 / JCM 8858 / NBRC 14720 / NCIMB 2260 / Gabara) (Halobacterium pharaonis).